Reading from the N-terminus, the 203-residue chain is High frequency lysogenization protein HflD homolog (203 aa).

This sequence belongs to the HflD family.

The protein resides in the cytoplasm. It localises to the cell inner membrane. This chain is High frequency lysogenization protein HflD homolog, found in Vesicomyosocius okutanii subsp. Calyptogena okutanii (strain HA).